A 465-amino-acid chain; its full sequence is Anthocyanidin 3-O-glucosyltransferase 2 (465 aa).

Residue H22 is the Proton acceptor of the active site. Residues H22 and Q87 each coordinate an anthocyanidin. D122 acts as the Charge relay in catalysis. T145 is a UDP-alpha-D-glucose binding site. H154 is a binding site for an anthocyanidin. UDP-alpha-D-glucose contacts are provided by A345, Q347, H362, W365, N366, S367, and E370. Position 385 (G385) interacts with an anthocyanidin. Residues D386 and Q387 each coordinate UDP-alpha-D-glucose.

This sequence belongs to the UDP-glycosyltransferase family. As to expression, highest expression detected in fruit, with very low levels detected in petal and leaf.

It carries out the reaction an anthocyanidin + UDP-alpha-D-glucose + H(+) = an anthocyanidin 3-O-beta-D-glucoside + UDP. The enzyme catalyses pelargonidin + UDP-alpha-D-glucose = pelargonidin 3-O-beta-D-glucoside + UDP. It catalyses the reaction cyanidin + UDP-alpha-D-glucose = cyanidin 3-O-beta-D-glucoside + UDP + H(+). Its pathway is pigment biosynthesis; anthocyanin biosynthesis. In terms of biological role, in the presence of other necessary color factors, this glycosylation reaction allows the accumulation of anthocyanin pigments. Anthocyanidins are the preferred substrates, while flavonols are only a minor substrate in vitro. The sequence is that of Anthocyanidin 3-O-glucosyltransferase 2 from Fragaria ananassa (Strawberry).